The chain runs to 135 residues: Large ribosomal subunit protein uL16 (135 aa).

Belongs to the universal ribosomal protein uL16 family. In terms of assembly, part of the 50S ribosomal subunit.

Functionally, binds 23S rRNA and is also seen to make contacts with the A and possibly P site tRNAs. The chain is Large ribosomal subunit protein uL16 from Desulfatibacillum aliphaticivorans.